The primary structure comprises 368 residues: Putative F-box/kelch-repeat protein At5g02995 (368 aa).

The F-box domain maps to 35 to 84 (SLYWNDPTEDCVWNCLARISRFHYPTLSLVSKGFRSLIASPELEATRSFI). Kelch repeat units follow at residues 140-186 (DIYI…IVDK) and 187-233 (KIYV…VSGG).

The sequence is that of Putative F-box/kelch-repeat protein At5g02995 from Arabidopsis thaliana (Mouse-ear cress).